Here is a 61-residue protein sequence, read N- to C-terminus: Weak toxin CM-2 (61 aa).

4 disulfide bridges follow: cysteine 3-cysteine 21, cysteine 14-cysteine 37, cysteine 41-cysteine 53, and cysteine 54-cysteine 59.

Belongs to the three-finger toxin family. Short-chain subfamily. Orphan group VI sub-subfamily. In terms of tissue distribution, expressed by the venom gland.

The protein resides in the secreted. This Naja haje haje (Egyptian cobra) protein is Weak toxin CM-2.